The primary structure comprises 134 residues: Profilin-2 (134 aa).

A disulfide bridge links cysteine 13 with cysteine 118. The Involved in PIP2 interaction signature appears at 84–100 (AVIRGKKGSGGITIKKT). At threonine 114 the chain carries Phosphothreonine.

The protein belongs to the profilin family. Occurs in many kinds of cells as a complex with monomeric actin in a 1:1 ratio. Phosphorylated by MAP kinases.

It localises to the cytoplasm. Its subcellular location is the cytoskeleton. Binds to actin and affects the structure of the cytoskeleton. At high concentrations, profilin prevents the polymerization of actin, whereas it enhances it at low concentrations. In Olea europaea (Common olive), this protein is Profilin-2.